The sequence spans 336 residues: Retinol dehydrogenase 10-B (336 aa).

The chain crosses the membrane as a helical; Signal-anchor span at residues 7–27 (LFVVTFKIIWSFVLAGAKWFI). NADP(+) is bound at residue 40-64 (VITGAGSGLGRLFALEFARRRATLV). Serine 192 contributes to the substrate binding site. The active-site Proton acceptor is the tyrosine 205.

It belongs to the short-chain dehydrogenases/reductases (SDR) family.

The protein resides in the microsome membrane. The protein localises to the endoplasmic reticulum membrane. It carries out the reaction all-trans-retinol + NADP(+) = all-trans-retinal + NADPH + H(+). The protein operates within cofactor metabolism; retinol metabolism. Its function is as follows. Retinol dehydrogenase with a clear preference for NADP. Converts all-trans-retinol to all-trans-retinal. Has no detectable activity towards 11-cis-retinol, 9-cis-retinol and 13-cis-retinol. The protein is Retinol dehydrogenase 10-B (rdh10b) of Danio rerio (Zebrafish).